The sequence spans 221 residues: Flagellar L-ring protein 1 (221 aa).

An N-terminal signal peptide occupies residues Met1 to Gly16. Residue Cys17 is the site of N-palmitoyl cysteine attachment. Residue Cys17 is the site of S-diacylglycerol cysteine attachment.

Belongs to the FlgH family. In terms of assembly, the basal body constitutes a major portion of the flagellar organelle and consists of four rings (L,P,S, and M) mounted on a central rod.

The protein localises to the cell outer membrane. It is found in the bacterial flagellum basal body. In terms of biological role, assembles around the rod to form the L-ring and probably protects the motor/basal body from shearing forces during rotation. The sequence is that of Flagellar L-ring protein 1 from Yersinia pestis.